A 493-amino-acid polypeptide reads, in one-letter code: Protein nucleotidyltransferase YdiU (493 aa).

Gly-96, Gly-98, Arg-99, Lys-119, Asp-131, Gly-132, Arg-182, and Arg-189 together coordinate ATP. Asp-258 acts as the Proton acceptor in catalysis. The Mg(2+) site is built by Asn-259 and Asp-268. Asp-268 contacts ATP. Residues 471-493 form a disordered region; sequence EKYTEFKNPPAPKERVSQTFCGT.

The protein belongs to the SELO family. Requires Mg(2+) as cofactor. It depends on Mn(2+) as a cofactor.

It carries out the reaction L-seryl-[protein] + ATP = 3-O-(5'-adenylyl)-L-seryl-[protein] + diphosphate. It catalyses the reaction L-threonyl-[protein] + ATP = 3-O-(5'-adenylyl)-L-threonyl-[protein] + diphosphate. The enzyme catalyses L-tyrosyl-[protein] + ATP = O-(5'-adenylyl)-L-tyrosyl-[protein] + diphosphate. The catalysed reaction is L-histidyl-[protein] + UTP = N(tele)-(5'-uridylyl)-L-histidyl-[protein] + diphosphate. It carries out the reaction L-seryl-[protein] + UTP = O-(5'-uridylyl)-L-seryl-[protein] + diphosphate. It catalyses the reaction L-tyrosyl-[protein] + UTP = O-(5'-uridylyl)-L-tyrosyl-[protein] + diphosphate. Nucleotidyltransferase involved in the post-translational modification of proteins. It can catalyze the addition of adenosine monophosphate (AMP) or uridine monophosphate (UMP) to a protein, resulting in modifications known as AMPylation and UMPylation. The chain is Protein nucleotidyltransferase YdiU from Nitrosococcus oceani (strain ATCC 19707 / BCRC 17464 / JCM 30415 / NCIMB 11848 / C-107).